The sequence spans 312 residues: MAVHQYTVALFLAVALVAGPAASYAADLGYGPATPAAPAAGYTPATPAAPAEAAPAGKATTEEQKLIEKINAGFKAALAAAAGVQPADKYRTFVATFGAASNKAFAEGLSGEPKGAAESSSKAALTSKLDAAYKLAYKTAEGATPEAKYDAYVATLSEALRIIAGTLEVHAVKPAAEEVKVIPAGELQVIEKVDAAFKVAATAANAAPANDKFTVFEAAFNDAIKASTGGAYESYKFIPALEAAVKQAYAATVATAPEVKYTVFETALKKAITAMSEAQKAAKPAAAATATATAAVGAATGAATAATGGYKV.

Residues 1 to 25 (MAVHQYTVALFLAVALVAGPAASYA) form the signal peptide.

It belongs to the Poa p IX/Phl p VI allergen family.

The protein resides in the secreted. This chain is Pollen allergen Phl p 5.0101, found in Phleum pratense (Common timothy).